We begin with the raw amino-acid sequence, 409 residues long: Putative competence-damage inducible protein (409 aa).

It belongs to the CinA family.

This chain is Putative competence-damage inducible protein, found in Clostridium botulinum (strain 657 / Type Ba4).